The following is a 921-amino-acid chain: Probable TonB-dependent receptor NMB1497 (921 aa).

Residues 1 to 25 (MRSSFRLKPICFYLMGVTLYHYSYA) form the signal peptide. In terms of domain architecture, TBDR plug spans 53 to 174 (DKKVFTDARA…LAGSANLRTL (122 aa)). The TBDR beta-barrel domain maps to 185–921 (TYGLLLKGLT…TFLMTMSYKF (737 aa)). Residues 904–921 (LTNFARGRTFLMTMSYKF) carry the TonB C-terminal box motif.

This sequence belongs to the TonB-dependent receptor family.

Its subcellular location is the cell outer membrane. Probable receptor, TonB-dependent. In Neisseria meningitidis serogroup B (strain ATCC BAA-335 / MC58), this protein is Probable TonB-dependent receptor NMB1497.